Consider the following 8922-residue polypeptide: Protein clarinet (8922 aa).

The interval Ser-11–Ser-35 is disordered. Positions Val-19–Gln-28 are enriched in acidic residues. Positions Lys-385 to Glu-405 form a coiled coil. Disordered stretches follow at residues Gln-527–Leu-579, Ile-622–Leu-673, Leu-687–Glu-860, Ser-880–Leu-955, Glu-971–Leu-1049, Ser-1062–Arg-1139, Ile-1151–Leu-1331, Glu-1347–Ser-1420, Ser-1444–Thr-1520, Ser-1538–Asp-1619, Ser-1632–Glu-1710, Ser-1726–Leu-1801, Ser-1820–Glu-1898, Val-1939–Glu-1992, Ile-2032–Thr-2084, Ile-2126–Pro-2175, Gln-2194–Leu-2213, Ile-2220–Asp-2246, Ser-2329–Glu-2403, Ser-2423–Leu-2497, Ser-2516–Glu-2594, Ser-2610–Glu-2684, Ser-2704–Phe-2845, Ser-2892–Lys-2963, Glu-2983–Leu-3155, Glu-3171–Leu-3249, Ser-3268–Leu-3337, Ser-3619–Asp-3639, Ala-3995–Ile-4079, Ile-4117–Thr-4169, Ser-4181–Ile-4271, Gln-4557–Glu-4624, Glu-4636–Leu-4656, Ser-4666–Ser-4685, Glu-4730–Gln-4801, Pro-4855–Asp-4899, Pro-5004–Thr-5036, Leu-5360–Ser-5379, Arg-5390–Leu-5413, Lys-5484–Val-5511, Pro-5540–Gly-5572, Ala-6194–Ser-6303, Asp-6354–Met-6437, Ser-6487–Ile-6510, Ala-6577–Leu-6609, Asn-6668–Arg-6691, Ala-6728–Gly-6768, Thr-6998–Ser-7018, Ala-7045–Asp-7098, Phe-7137–Pro-7175, Glu-7202–Arg-7263, Lys-7313–Glu-7350, Asp-7598–Met-7623, Thr-7760–Thr-7797, and His-7842–Val-7881. The span at Ser-531–Asp-552 shows a compositional bias: basic and acidic residues. The segment covering Met-760–Ala-776 has biased composition (basic and acidic residues). Residues Ser-1062–Pro-1076 show a composition bias toward low complexity. The segment covering Met-1230–His-1244 has biased composition (basic and acidic residues). Residues Ile-1251–Ser-1261 are compositionally biased toward polar residues. Composition is skewed to basic and acidic residues over residues Met-1606 to Asp-1619 and Met-1700 to Glu-1710. Basic and acidic residues-rich tracts occupy residues Met-1888–Glu-1898 and Met-1982–Glu-1992. Residues Gln-2194–Thr-2204 show a composition bias toward polar residues. Over residues Met-2584–Glu-2594 the composition is skewed to basic and acidic residues. Residues Met-2772 to Ala-2788 show a composition bias toward basic and acidic residues. Polar residues predominate over residues Leu-2793 to Ser-2803. Residues Ala-3076–Ser-3085 are compositionally biased toward polar residues. A compositionally biased stretch (polar residues) spans Gly-4035–Thr-4044. The span at Pro-4065–Ile-4079 shows a compositional bias: basic and acidic residues. 3 stretches are compositionally biased toward polar residues: residues Leu-4182–Pro-4195, Ser-4223–Phe-4234, and Met-4255–Ile-4271. A compositionally biased stretch (basic and acidic residues) spans Ile-4571–Ser-4580. Polar residues predominate over residues Asn-4581–Gln-4594. Residues Met-4613 to Glu-4624 show a composition bias toward basic and acidic residues. A compositionally biased stretch (polar residues) spans Glu-4636–Thr-4645. The span at Glu-4730 to Thr-4739 shows a compositional bias: polar residues. Low complexity predominate over residues Glu-4871–Ser-4890. Residues Glu-5009 to Thr-5023 show a composition bias toward polar residues. Residues Arg-5390 to Arg-5407 are compositionally biased toward low complexity. Residues Gln-5486–Ser-5499 are compositionally biased toward polar residues. A compositionally biased stretch (pro residues) spans Pro-5540–Pro-5550. Over residues Arg-5560–Gly-5572 the composition is skewed to low complexity. 2 stretches are compositionally biased toward polar residues: residues Ala-6225 to Phe-6245 and Lys-6270 to Arg-6284. Composition is skewed to basic and acidic residues over residues Lys-6285 to Ser-6303 and Gly-6376 to Leu-6422. Residues Leu-6494–Ser-6505 are compositionally biased toward polar residues. The segment covering Ser-6590–Ser-6600 has biased composition (low complexity). The span at Glu-6670–Pro-6687 shows a compositional bias: polar residues. Low complexity predominate over residues Ser-6735 to Ser-6747. 2 stretches are compositionally biased toward basic and acidic residues: residues Thr-6998–Thr-7008 and Ala-7045–Glu-7069. Positions Ser-7071–Thr-7086 are enriched in low complexity. A compositionally biased stretch (basic and acidic residues) spans Thr-7155–Pro-7175. Over residues Ser-7248 to Tyr-7260 the composition is skewed to acidic residues. Over residues Lys-7313–Pro-7331 the composition is skewed to low complexity. The segment covering Ser-7599 to Asn-7609 has biased composition (basic and acidic residues). 2 stretches are compositionally biased toward low complexity: residues Ser-7777–Ser-7788 and Ala-7854–Ser-7880. Positions Lys-7895–Glu-7915 form a coiled coil. Positions Ser-8510–Glu-8562 are disordered. 2 stretches are compositionally biased toward polar residues: residues Thr-8517–Arg-8530 and Ser-8541–Met-8551. The segment covering Pro-8552–Glu-8562 has biased composition (basic and acidic residues). Positions Arg-8570–Lys-8661 constitute a PDZ domain. Residues Cys-8714–Tyr-8835 enclose the C2 domain.

Expressed in the nervous system.

It is found in the synapse. The protein resides in the cell projection. It localises to the axon. Its function is as follows. Required for synapse development in the active zone of presynaptic terminals of specific neurons including serotonergic NSM neurons. The active zone is a protein-dense neuronal region within the presynaptic bouton, from which synaptic vesicles send neurotransmitter signals across the synapse. Plays a role in the recruitment and clustering of synaptic vesicles in the active zone of presynaptic terminals in serotonergic NSM neurons, and coordinates the release of synaptic vesicles at presynaptic terminals to regulate neurotransmission at neuromuscular junctions. Regulates synapse number in inhibitory motor neurons and plays a role in spontaneous postsynaptic synaptic vesicle release in muscle cells. The protein is Protein clarinet of Caenorhabditis elegans.